We begin with the raw amino-acid sequence, 189 residues long: Threonylcarbamoyl-AMP synthase (189 aa).

The 181-residue stretch at 9 to 189 (ASAQRKLSVY…IDGETGKRLR (181 aa)) folds into the YrdC-like domain.

It belongs to the SUA5 family. TsaC subfamily.

It localises to the cytoplasm. The catalysed reaction is L-threonine + hydrogencarbonate + ATP = L-threonylcarbamoyladenylate + diphosphate + H2O. Its function is as follows. Required for the formation of a threonylcarbamoyl group on adenosine at position 37 (t(6)A37) in tRNAs that read codons beginning with adenine. Catalyzes the conversion of L-threonine, HCO(3)(-)/CO(2) and ATP to give threonylcarbamoyl-AMP (TC-AMP) as the acyladenylate intermediate, with the release of diphosphate. This chain is Threonylcarbamoyl-AMP synthase, found in Neisseria meningitidis serogroup C (strain 053442).